A 470-amino-acid polypeptide reads, in one-letter code: MSSKQVPDTLTFECETGNYHTFCPISCVAWLYQKIEDSFFLVVGTKTCGYFLQNALGVMIFAEPRYAMAELEEGDISAQLNDYEELKRLCVQIKKDRNPSVIVWIGTCTTEIIKMDLEGMAPRLEAEIDIPIVVARANGLDYAFTQGEDTVLAAMANRCPEWIQNAQNNNDQDQAIQGLMSFFPLKNTKLSSEPTLLSNHPPLVLFGSLPSNVASQITLELKRQNIHVSGWLPAQRYSELPSVGEGVYVCGVNPFLSRTATTLMRRRKCKLIGAPFPIGPDGTRAWIEKICSVFGIEPQGLEEREAQVWKGLQDYLDLVRGKSVFFMGDNLLEVSLARFLIRCGMIVYEIGIPYMDKRYQAAELALLQQTCEQMGTPMPRIVEKPDNYNQVQRMRELQPDLAITGMAHANPLEARGISTKWSVEFTFAQIHGFTNARDILELVTRPLRRNLSLEDLGWSALVKRDKINLV.

[4Fe-4S] cluster is bound by residues C23, C48, and C108.

The protein belongs to the BchN/ChlN family. In terms of assembly, protochlorophyllide reductase is composed of three subunits; ChlL, ChlN and ChlB. Forms a heterotetramer of two ChlB and two ChlN subunits. It depends on [4Fe-4S] cluster as a cofactor.

The protein localises to the plastid. Its subcellular location is the chloroplast. The catalysed reaction is chlorophyllide a + oxidized 2[4Fe-4S]-[ferredoxin] + 2 ADP + 2 phosphate = protochlorophyllide a + reduced 2[4Fe-4S]-[ferredoxin] + 2 ATP + 2 H2O. The protein operates within porphyrin-containing compound metabolism; chlorophyll biosynthesis (light-independent). Component of the dark-operative protochlorophyllide reductase (DPOR) that uses Mg-ATP and reduced ferredoxin to reduce ring D of protochlorophyllide (Pchlide) to form chlorophyllide a (Chlide). This reaction is light-independent. The NB-protein (ChlN-ChlB) is the catalytic component of the complex. This is Light-independent protochlorophyllide reductase subunit N from Zygnema circumcarinatum (Green alga).